The primary structure comprises 310 residues: 4-hydroxy-3-methylbut-2-enyl diphosphate reductase (310 aa).

C12 provides a ligand contact to [4Fe-4S] cluster. The (2E)-4-hydroxy-3-methylbut-2-enyl diphosphate site is built by H41 and H74. Dimethylallyl diphosphate contacts are provided by H41 and H74. Isopentenyl diphosphate is bound by residues H41 and H74. C96 is a binding site for [4Fe-4S] cluster. H124 is a binding site for (2E)-4-hydroxy-3-methylbut-2-enyl diphosphate. H124 is a dimethylallyl diphosphate binding site. H124 is an isopentenyl diphosphate binding site. The Proton donor role is filled by E126. T167 is a binding site for (2E)-4-hydroxy-3-methylbut-2-enyl diphosphate. C197 contacts [4Fe-4S] cluster. (2E)-4-hydroxy-3-methylbut-2-enyl diphosphate contacts are provided by S225, S226, N227, and S269. Dimethylallyl diphosphate is bound by residues S225, S226, N227, and S269. The isopentenyl diphosphate site is built by S225, S226, N227, and S269.

It belongs to the IspH family. [4Fe-4S] cluster is required as a cofactor.

It carries out the reaction isopentenyl diphosphate + 2 oxidized [2Fe-2S]-[ferredoxin] + H2O = (2E)-4-hydroxy-3-methylbut-2-enyl diphosphate + 2 reduced [2Fe-2S]-[ferredoxin] + 2 H(+). The catalysed reaction is dimethylallyl diphosphate + 2 oxidized [2Fe-2S]-[ferredoxin] + H2O = (2E)-4-hydroxy-3-methylbut-2-enyl diphosphate + 2 reduced [2Fe-2S]-[ferredoxin] + 2 H(+). It participates in isoprenoid biosynthesis; dimethylallyl diphosphate biosynthesis; dimethylallyl diphosphate from (2E)-4-hydroxy-3-methylbutenyl diphosphate: step 1/1. It functions in the pathway isoprenoid biosynthesis; isopentenyl diphosphate biosynthesis via DXP pathway; isopentenyl diphosphate from 1-deoxy-D-xylulose 5-phosphate: step 6/6. In terms of biological role, catalyzes the conversion of 1-hydroxy-2-methyl-2-(E)-butenyl 4-diphosphate (HMBPP) into a mixture of isopentenyl diphosphate (IPP) and dimethylallyl diphosphate (DMAPP). Acts in the terminal step of the DOXP/MEP pathway for isoprenoid precursor biosynthesis. This is 4-hydroxy-3-methylbut-2-enyl diphosphate reductase from Tolumonas auensis (strain DSM 9187 / NBRC 110442 / TA 4).